A 233-amino-acid polypeptide reads, in one-letter code: Small ribosomal subunit protein uS3 (233 aa).

Residues V39 to R107 form the KH type-2 domain.

This sequence belongs to the universal ribosomal protein uS3 family. Part of the 30S ribosomal subunit. Forms a tight complex with proteins S10 and S14.

In terms of biological role, binds the lower part of the 30S subunit head. Binds mRNA in the 70S ribosome, positioning it for translation. The protein is Small ribosomal subunit protein uS3 of Photorhabdus laumondii subsp. laumondii (strain DSM 15139 / CIP 105565 / TT01) (Photorhabdus luminescens subsp. laumondii).